Here is a 160-residue protein sequence, read N- to C-terminus: Sulfur-rich protein (160 aa).

The next 2 membrane-spanning stretches (helical) occupy residues 63-83 (ITMI…TFVL) and 92-112 (FLFL…SVFM).

The protein localises to the membrane. The protein is Sulfur-rich protein (srp) of Chlamydia abortus (strain DSM 27085 / S26/3) (Chlamydophila abortus).